The primary structure comprises 156 residues: Endogenous retrovirus group K member 24 Pro protein (156 aa).

The Peptidase A2 domain maps to 21–96 (FEGLVDTGAD…IPLNLWGRDL (76 aa)). Asp-26 is an active-site residue. The region spanning 111–156 (YSPTSQKIMTKMGYIPGKGLGKNEDGIKIPFEAKINQKREGIGYPF) is the G-patch domain.

It belongs to the peptidase A2 family. HERV class-II K(HML-2) subfamily. In terms of assembly, active as a homodimer. Post-translationally, autoproteolytically processed at the N-terminus. Expected C-terminal autoprocessing not detected. The sequence shown is that of the processed Pro protein.

It carries out the reaction Processing at the authentic HIV-1 PR recognition site and release of the mature p17 matrix and the p24 capsid protein, as a result of the cleavage of the -SQNY-|-PIVQ- cleavage site.. In terms of biological role, retroviral proteases have roles in processing of the primary translation products and the maturation of the viral particle. Endogenous Pro proteins may have kept, lost or modified their original function during evolution. This endogenous protein has retained most of the characteristics of retroviral proteases. The chain is Endogenous retrovirus group K member 24 Pro protein (ERVK-24) from Homo sapiens (Human).